Here is a 100-residue protein sequence, read N- to C-terminus: Large ribosomal subunit protein bL27 (100 aa).

Positions 1–9 (MLVMNLQLF) are excised as a propeptide.

It belongs to the bacterial ribosomal protein bL27 family. In terms of processing, the N-terminus is cleaved by ribosomal processing cysteine protease Prp.

This Clostridium botulinum (strain Hall / ATCC 3502 / NCTC 13319 / Type A) protein is Large ribosomal subunit protein bL27.